The chain runs to 202 residues: UPF0316 protein SH1041 (202 aa).

The next 3 membrane-spanning stretches (helical) occupy residues 8–28 (PWSMVLAIFVINVFYVTFLTM), 40–60 (MAAAVSFLEVLVYVVGLGMVM), and 66–86 (IQNIFAYAFGFSIGILVGMKI).

It belongs to the UPF0316 family.

The protein resides in the cell membrane. In Staphylococcus haemolyticus (strain JCSC1435), this protein is UPF0316 protein SH1041.